A 601-amino-acid polypeptide reads, in one-letter code: Protein nubbin (601 aa).

Positions 1 to 25 (MVMSELRWHTASPEDNKNSLKRDLL) are enriched in basic and acidic residues. Disordered regions lie at residues 1–32 (MVMS…PTSA), 49–94 (SRSP…AKRQ), 121–158 (KQEE…ATAS), 351–425 (PASS…ETTD), and 581–601 (INPS…YMMH). Residues 49 to 68 (SRSPSPLQSNASDCDDNNSS) show a composition bias toward low complexity. The span at 135-157 (NLTSDNSRHSTQSPSNSVKSATA) shows a compositional bias: polar residues. A compositionally biased stretch (low complexity) spans 384-415 (TPSTPTSGTQMSQGTTTPQPKTVASAAAARAA). The POU-specific domain maps to 421–495 (EETTDLEELE…LLQKWLDDAD (75 aa)). Residues 523-582 (RRKKRTSIETTIRGALEKAFLANQKPTSEEITQLADRLSMEKEVVRVWFCNRRQKEKRIN) constitute a DNA-binding region (homeobox). Residues 591–601 (ADDDESSYMMH) show a composition bias toward acidic residues.

It belongs to the POU transcription factor family. Class-2 subfamily. In terms of tissue distribution, initial expression in cellular blastoderm stage, then in ectodermal stripes during germband extension. Broad expression in the neuroectoderm followed by limitation to discrete subsets of CNS cells, and expression in specific PNS neurons and support cells.

It is found in the nucleus. Its function is as follows. DNA-binding regulatory protein implicated in early development. Involved in neuronal cell fate decision. Repressed directly or indirectly by the BX-C homeotic proteins. This is Protein nubbin (nub) from Drosophila melanogaster (Fruit fly).